The sequence spans 399 residues: Bone morphogenetic protein 8A (399 aa).

The first 19 residues, 1–19 (MAMRPGPLWLLGLALCALG), serve as a signal peptide directing secretion. A propeptide spanning residues 20 to 260 (GGHGPRPPHT…ASQSPVRAPR (241 aa)) is cleaved from the precursor. Asparagine 155 carries N-linked (GlcNAc...) asparagine glycosylation. The segment at 257 to 286 (RAPRAARPLKRRQPKKTNELPHPNKLPGIF) is disordered. Intrachain disulfides connect cysteine 298–cysteine 364, cysteine 327–cysteine 396, and cysteine 331–cysteine 398. N-linked (GlcNAc...) asparagine glycosylation is present at asparagine 340.

It belongs to the TGF-beta family. As to quaternary structure, homodimer; disulfide-linked. In terms of tissue distribution, expressed in testis. expressed in trophoblast cells of the labyrinthine region of the placenta and in the inner root sheath of hair follicles of early postnatal skin. Expressed predominantly in the neonatal mouse spermatogonia.

The protein localises to the secreted. In terms of biological role, growth factor of the TGF-beta superfamily that plays important role in various biological processes, including spermatogenesis, osteogenesis, steroidogenesis as well as regulation of energy balance. Initiates the canonical BMP signaling cascade by associating with type I receptor BMPR1A and type II receptor BMPR2. Once all three components are bound together in a complex at the cell surface, BMPR2 phosphorylates and activates BMPR1A. In turn, BMPR1A propagates signal by phosphorylating SMAD1/5/8 that travel to the nucleus and act as activators and repressors of transcription of target genes. In addition, activates the SMAD2/3 pathway. The protein is Bone morphogenetic protein 8A (Bmp8a) of Mus musculus (Mouse).